We begin with the raw amino-acid sequence, 106 residues long: Iron-sulfur cluster assembly protein CyaY (106 aa).

It belongs to the frataxin family.

Functionally, involved in iron-sulfur (Fe-S) cluster assembly. May act as a regulator of Fe-S biogenesis. The protein is Iron-sulfur cluster assembly protein CyaY of Escherichia coli O139:H28 (strain E24377A / ETEC).